Consider the following 458-residue polypeptide: Phosphoglucosamine mutase (458 aa).

Ser-106 serves as the catalytic Phosphoserine intermediate. Positions 106, 247, 249, and 251 each coordinate Mg(2+). Ser-106 is subject to Phosphoserine.

Belongs to the phosphohexose mutase family. It depends on Mg(2+) as a cofactor. In terms of processing, activated by phosphorylation.

The enzyme catalyses alpha-D-glucosamine 1-phosphate = D-glucosamine 6-phosphate. In terms of biological role, catalyzes the conversion of glucosamine-6-phosphate to glucosamine-1-phosphate. The sequence is that of Phosphoglucosamine mutase from Chlamydia trachomatis serovar A (strain ATCC VR-571B / DSM 19440 / HAR-13).